The chain runs to 138 residues: Nucleoside diphosphate kinase (138 aa).

Positions 9, 57, 85, 91, 102, and 112 each coordinate ATP. His-115 (pros-phosphohistidine intermediate) is an active-site residue.

The protein belongs to the NDK family. Homotetramer. Mg(2+) serves as cofactor.

The protein localises to the cytoplasm. It carries out the reaction a 2'-deoxyribonucleoside 5'-diphosphate + ATP = a 2'-deoxyribonucleoside 5'-triphosphate + ADP. The catalysed reaction is a ribonucleoside 5'-diphosphate + ATP = a ribonucleoside 5'-triphosphate + ADP. Its function is as follows. Major role in the synthesis of nucleoside triphosphates other than ATP. The ATP gamma phosphate is transferred to the NDP beta phosphate via a ping-pong mechanism, using a phosphorylated active-site intermediate. The polypeptide is Nucleoside diphosphate kinase (Deinococcus radiodurans (strain ATCC 13939 / DSM 20539 / JCM 16871 / CCUG 27074 / LMG 4051 / NBRC 15346 / NCIMB 9279 / VKM B-1422 / R1)).